The following is a 233-amino-acid chain: MNIFKLSRTDMVRLLYSLKGQGEHSPLDILVQSANMSAEKAANHLEIPEFLTRYERKKQKKEYGLSTNEIVELGNLCELTSLKSTAIQNWVKRDIKDLIGHPELGKKYSIEQAVILLIVRDLKSIYDFEHIRAILKVAFNTISDRSDDVISPIAYYESCAYVLDAIHHQDTPSMKESNLQEIAEQETERLRHRFEELNDSQWLKIRQIIAITVLSILTFHIQATAHKMTADIL.

This is an uncharacterized protein from Bacillus subtilis (strain 168).